The following is a 48-amino-acid chain: Large ribosomal subunit protein bL33A (48 aa).

It belongs to the bacterial ribosomal protein bL33 family.

The sequence is that of Large ribosomal subunit protein bL33A from Exiguobacterium sibiricum (strain DSM 17290 / CCUG 55495 / CIP 109462 / JCM 13490 / 255-15).